Reading from the N-terminus, the 688-residue chain is TBC1 domain family member 25 (688 aa).

The disordered stretch occupies residues 1–27; it reads MATASGASDLSGSGAPPPGVGAQAAAA. S140 is subject to Phosphoserine. Residue T160 is modified to Phosphothreonine. Residues 228–434 form the Rab-GAP TBC domain; sequence GVEPSLRKVV…RMLEVTWSSL (207 aa). S506 is subject to Phosphoserine. Residues 544–567 show a composition bias toward low complexity; sequence LNSPDPLLSSFSHPDSPSSSSPPS. The tract at residues 544–606 is disordered; it reads LNSPDPLLSS…LPPVPPMGLP (63 aa). A compositionally biased stretch (pro residues) spans 596 to 606; that stretch reads SLPPVPPMGLP.

In terms of assembly, interacts (via N-terminus) with MAP1LC3B, GABARAP and GABARAPL2.

The protein resides in the cytoplasm. It localises to the cytoplasmic vesicle. The protein localises to the autophagosome. In terms of biological role, acts as a GTPase-activating protein specific for RAB33B. Involved in the regulation of autophagosome maturation, the process in which autophagosomes fuse with endosomes and lysosomes. The chain is TBC1 domain family member 25 (TBC1D25) from Homo sapiens (Human).